A 637-amino-acid polypeptide reads, in one-letter code: MTAAQKETLGFQTEVKQLLNLMIHSLYSNKEIFLRELVSNASDAADKLRFLALSQGDLYQGDADLRVRISADKEANTITISDNGIGMTRDEVISSLGTIAKSGTAEFFKNLTGDQSKDSQLIGQFGVGFYSAFIVADLVTVRTRKAGETTAYEWESQGEGEYTLQEIEKEGRGTDIILHLREEEKEFADEWRLRSIVTKYSDHISTPVQMYKAEVPESEGEDGEKIPAVPGEWESINRATALWTRDKSELSDDEYKEFYKHVSLDWEDPLSWAHNKVEGKTEYTSLLYIPKKAPFDLWNRDRQSGLKLYVQRVFIMDDAEQFMPSYLRFVKGLLDSNDLPLNVSREILQDNKVTQAIRKGCTSRIIKMLERMAKNKADDYQVFWNEFGQVIKEGPAEDAANKEAICKLLRFSSTHTDSATQDVSLEQYVERMNEGQEKIYYVVADTFTAAKNSPHLEIFRKKGIEVLLLSDRVDEWMMSHLTEFADKQLQSITRGDLDLGKLDDEETKKAQEESEKEVAGLVERIKTALGDEVKEVRFTHRLTDSPACVVSDDNDMSSQMQKLMESVGQAAPEAKPVFELNPEHQLVKHLNDEQDEDKFAQWSHVLLDQALLAERGTLKDPTGFVTRLNKLMLELSK.

The a; substrate-binding stretch occupies residues 1 to 345; the sequence is MTAAQKETLG…SNDLPLNVSR (345 aa). The b stretch occupies residues 346–562; the sequence is EILQDNKVTQ…DNDMSSQMQK (217 aa). The tract at residues 563-637 is c; that stretch reads LMESVGQAAP…LNKLMLELSK (75 aa).

It belongs to the heat shock protein 90 family. In terms of assembly, homodimer.

Its subcellular location is the cytoplasm. Its function is as follows. Molecular chaperone. Has ATPase activity. This Pseudoalteromonas translucida (strain TAC 125) protein is Chaperone protein HtpG.